We begin with the raw amino-acid sequence, 137 residues long: Proofreading thioesterase EntH (137 aa).

Catalysis depends on Glu63, which acts as the Nucleophile or proton acceptor.

Belongs to the thioesterase PaaI family. As to quaternary structure, homotetramer. Dimer of dimers. Interacts specifically with the aryl carrier protein (ArCP) domain of EntB.

It localises to the cytoplasm. It participates in siderophore biosynthesis; enterobactin biosynthesis. Functionally, required for optimal enterobactin synthesis. Acts as a proofreading enzyme that prevents EntB misacylation by hydrolyzing the thioester bound existing between EntB and wrongly charged molecules. This Enterobacter lignolyticus (strain SCF1) protein is Proofreading thioesterase EntH.